The chain runs to 212 residues: Uridine kinase (212 aa).

13-20 contributes to the ATP binding site; the sequence is GASASGKS.

Belongs to the uridine kinase family.

The protein resides in the cytoplasm. The catalysed reaction is uridine + ATP = UMP + ADP + H(+). The enzyme catalyses cytidine + ATP = CMP + ADP + H(+). It functions in the pathway pyrimidine metabolism; CTP biosynthesis via salvage pathway; CTP from cytidine: step 1/3. Its pathway is pyrimidine metabolism; UMP biosynthesis via salvage pathway; UMP from uridine: step 1/1. In Shewanella halifaxensis (strain HAW-EB4), this protein is Uridine kinase.